The chain runs to 93 residues: Acylphosphatase (93 aa).

Residues 6-93 enclose the Acylphosphatase-like domain; sequence RARIVVSGRV…GDLGAFEIRF (88 aa). Catalysis depends on residues arginine 21 and asparagine 39.

The protein belongs to the acylphosphatase family.

It catalyses the reaction an acyl phosphate + H2O = a carboxylate + phosphate + H(+). The protein is Acylphosphatase (acyP) of Anaeromyxobacter dehalogenans (strain 2CP-C).